Reading from the N-terminus, the 858-residue chain is Alanine--tRNA ligase (858 aa).

The Zn(2+) site is built by His550, His554, Cys652, and His656.

This sequence belongs to the class-II aminoacyl-tRNA synthetase family. Zn(2+) serves as cofactor.

The protein localises to the cytoplasm. The enzyme catalyses tRNA(Ala) + L-alanine + ATP = L-alanyl-tRNA(Ala) + AMP + diphosphate. Functionally, catalyzes the attachment of alanine to tRNA(Ala) in a two-step reaction: alanine is first activated by ATP to form Ala-AMP and then transferred to the acceptor end of tRNA(Ala). Also edits incorrectly charged Ser-tRNA(Ala) and Gly-tRNA(Ala) via its editing domain. This Pseudothermotoga lettingae (strain ATCC BAA-301 / DSM 14385 / NBRC 107922 / TMO) (Thermotoga lettingae) protein is Alanine--tRNA ligase.